Here is an 81-residue protein sequence, read N- to C-terminus: MAGRKKAADFEQQLARLQEIVDALEGGDLPLEKSVALYKEGLGLARASREQLAKARNEIRLFTEGEVRDFDPEEGDDGDDR.

The protein belongs to the XseB family. Heterooligomer composed of large and small subunits.

The protein resides in the cytoplasm. It catalyses the reaction Exonucleolytic cleavage in either 5'- to 3'- or 3'- to 5'-direction to yield nucleoside 5'-phosphates.. In terms of biological role, bidirectionally degrades single-stranded DNA into large acid-insoluble oligonucleotides, which are then degraded further into small acid-soluble oligonucleotides. In Nitratidesulfovibrio vulgaris (strain ATCC 29579 / DSM 644 / CCUG 34227 / NCIMB 8303 / VKM B-1760 / Hildenborough) (Desulfovibrio vulgaris), this protein is Exodeoxyribonuclease 7 small subunit.